The chain runs to 107 residues: Phosphoribosyl-ATP pyrophosphatase (107 aa).

Belongs to the PRA-PH family.

It is found in the cytoplasm. It carries out the reaction 1-(5-phospho-beta-D-ribosyl)-ATP + H2O = 1-(5-phospho-beta-D-ribosyl)-5'-AMP + diphosphate + H(+). It participates in amino-acid biosynthesis; L-histidine biosynthesis; L-histidine from 5-phospho-alpha-D-ribose 1-diphosphate: step 2/9. The protein is Phosphoribosyl-ATP pyrophosphatase (hisE) of Caulobacter vibrioides (strain ATCC 19089 / CIP 103742 / CB 15) (Caulobacter crescentus).